Consider the following 711-residue polypeptide: Double-stranded RNA-specific editase 1 (711 aa).

Positions 1–79 (MDIEDEENMS…RRKTPGPVLP (79 aa)) are disordered. The span at 63 to 73 (SKYRLKKRRKT) shows a compositional bias: basic residues. Residues 78–144 (LPKNALMQLN…AEKALRSFVQ (67 aa)) form the DRBM 1 domain. Interaction with substrate RNA regions lie at residues 83–88 (LMQLNE) and 104–105 (VH). At Ser-149 the chain carries Phosphoserine. Positions 176–220 (LFNGFETPDKSEPPFYVGSNGDDSFSSSGDVSLSASPVPASLTQP) are disordered. The segment covering 192–213 (VGSNGDDSFSSSGDVSLSASPV) has biased composition (low complexity). The DRBM 2 domain occupies 231-298 (PSGKNPVMIL…AQSALATVFN (68 aa)). 2 interaction with substrate RNA regions span residues 237–242 (VMILNE) and His-259. The A to I editase domain maps to 370 to 707 (SVSTGTKCIN…VEKPTEQDQF (338 aa)). Zn(2+) is bound at residue His-394. Glu-396 acts as the Proton donor in catalysis. 2 residues coordinate 1D-myo-inositol hexakisphosphate: Arg-400 and Arg-401. Zn(2+) contacts are provided by Cys-451 and Cys-526. 6 residues coordinate 1D-myo-inositol hexakisphosphate: Lys-529, Arg-532, Lys-639, Lys-672, Lys-682, and Lys-700.

In terms of assembly, homodimer. Homodimerization is essential for its catalytic activity. Can form heterodimers with isoform 5 of ADAR/ADAR1. Requires 1D-myo-inositol hexakisphosphate as cofactor. Brain and peripheral tissues.

Its subcellular location is the nucleus. The protein resides in the nucleolus. The enzyme catalyses adenosine in double-stranded RNA + H2O + H(+) = inosine in double-stranded RNA + NH4(+). Its function is as follows. Catalyzes the hydrolytic deamination of adenosine to inosine in double-stranded RNA (dsRNA) referred to as A-to-I RNA editing. This may affect gene expression and function in a number of ways that include mRNA translation by changing codons and hence the amino acid sequence of proteins; pre-mRNA splicing by altering splice site recognition sequences; RNA stability by changing sequences involved in nuclease recognition; genetic stability in the case of RNA virus genomes by changing sequences during viral RNA replication; and RNA structure-dependent activities such as microRNA production or targeting or protein-RNA interactions. Can edit both viral and cellular RNAs and can edit RNAs at multiple sites (hyper-editing) or at specific sites (site-specific editing). Its cellular RNA substrates include: bladder cancer-associated protein (BLCAP), neurotransmitter receptors for glutamate (GRIA2 and GRIK2) and serotonin (HTR2C), GABA receptor (GABRA3) and potassium voltage-gated channel (KCNA1). Site-specific RNA editing of transcripts encoding these proteins results in amino acid substitutions which consequently alter their functional activities. Edits GRIA2 at both the Q/R and R/G sites efficiently but converts the adenosine in hotspot1 much less efficiently. Can inhibit cell proliferation and migration and can stimulate exocytosis. The chain is Double-stranded RNA-specific editase 1 (Adarb1) from Rattus norvegicus (Rat).